We begin with the raw amino-acid sequence, 470 residues long: Glucose-1-phosphate adenylyltransferase large subunit 1 (470 aa).

It belongs to the bacterial/plant glucose-1-phosphate adenylyltransferase family. As to quaternary structure, heterotetramer. In terms of tissue distribution, prominently expressed in the leaves and a weaker expression is seen in the tubers.

The protein resides in the plastid. It localises to the chloroplast. It is found in the amyloplast. It catalyses the reaction alpha-D-glucose 1-phosphate + ATP + H(+) = ADP-alpha-D-glucose + diphosphate. It functions in the pathway glycan biosynthesis; starch biosynthesis. Activated by 3'phosphoglycerate, inhibited by orthophosphate. Allosteric regulation. Functionally, this protein plays a role in synthesis of starch. It catalyzes the synthesis of the activated glycosyl donor, ADP-glucose from Glc-1-P and ATP. In Solanum tuberosum (Potato), this protein is Glucose-1-phosphate adenylyltransferase large subunit 1 (AGPS1).